The chain runs to 116 residues: U16-barytoxin-Tl1f (116 aa).

An N-terminal signal peptide occupies residues 1 to 20 (MKTIIVFLSLLVLATKFGDA). Positions 21 to 74 (NEGVNQEQMKEVIQNEFREDFLNEMAAMSLLQQLEAIESTLLEKEADRNSRQKR) are excised as a propeptide. Cystine bridges form between C75–C90, C82–C95, and C89–C110. N85 is a glycosylation site (N-linked (GlcNAc...) asparagine).

This sequence belongs to the neurotoxin 14 (magi-1) family. 06 (ICK-Trit) subfamily. In terms of tissue distribution, expressed by the venom gland.

Its subcellular location is the secreted. Ion channel inhibitor. This is U16-barytoxin-Tl1f from Trittame loki (Brush-footed trapdoor spider).